A 98-amino-acid polypeptide reads, in one-letter code: Small ribosomal subunit protein bS20 (98 aa).

It belongs to the bacterial ribosomal protein bS20 family.

Its function is as follows. Binds directly to 16S ribosomal RNA. This is Small ribosomal subunit protein bS20 from Synechococcus sp. (strain CC9902).